The chain runs to 626 residues: DNA-directed RNA polymerase subunit gamma (626 aa).

Zn(2+) is bound by residues Cys-71, Cys-73, Cys-86, and Cys-89. Asp-467, Asp-469, and Asp-471 together coordinate Mg(2+).

It belongs to the RNA polymerase beta' chain family. RpoC1 subfamily. In cyanobacteria the RNAP catalytic core is composed of 2 alpha, 1 beta, 1 beta', 1 gamma and 1 omega subunit. When a sigma factor is associated with the core the holoenzyme is formed, which can initiate transcription. Requires Mg(2+) as cofactor. The cofactor is Zn(2+).

The enzyme catalyses RNA(n) + a ribonucleoside 5'-triphosphate = RNA(n+1) + diphosphate. In terms of biological role, DNA-dependent RNA polymerase catalyzes the transcription of DNA into RNA using the four ribonucleoside triphosphates as substrates. The chain is DNA-directed RNA polymerase subunit gamma from Microcystis aeruginosa (strain NIES-843 / IAM M-2473).